Consider the following 597-residue polypeptide: Probable translation initiation factor IF-2 (597 aa).

The tr-type G domain occupies 4 to 221 (IRQPIIAVLG…LIAGLSQKYL (218 aa)). The G1 stretch occupies residues 13-20 (GHVDHGKT). 13 to 20 (GHVDHGKT) contributes to the GTP binding site. Positions 38 to 42 (GITQH) are G2. Positions 77–80 (DTPG) are G3. Residues 77 to 81 (DTPGH) and 131 to 134 (NKID) each bind GTP. The G4 stretch occupies residues 131-134 (NKID). The interval 199–201 (SAK) is G5.

This sequence belongs to the TRAFAC class translation factor GTPase superfamily. Classic translation factor GTPase family. IF-2 subfamily.

Its function is as follows. Function in general translation initiation by promoting the binding of the formylmethionine-tRNA to ribosomes. Seems to function along with eIF-2. The sequence is that of Probable translation initiation factor IF-2 from Thermococcus onnurineus (strain NA1).